An 82-amino-acid polypeptide reads, in one-letter code: Large ribosomal subunit protein eL14 (82 aa).

The protein belongs to the eukaryotic ribosomal protein eL14 family.

The sequence is that of Large ribosomal subunit protein eL14 from Pyrococcus abyssi (strain GE5 / Orsay).